The following is a 766-amino-acid chain: General transcription and DNA repair factor IIH helicase/translocase subunit XPB2 (766 aa).

Positions 1–56 (MGNDERKRPTKKMKYGGKDDQKMKNIQNVEDYYDDADEDSRDGEGEEKRRDFTDLE) are disordered. Acidic residues predominate over residues 31–41 (DYYDDADEDSR). Positions 42–56 (DGEGEEKRRDFTDLE) are enriched in basic and acidic residues. A Helicase ATP-binding domain is found at 293 to 455 (MFGNGRARSG…DLNFLIGPKL (163 aa)). 306 to 313 (LPCGAGKS) provides a ligand contact to ATP. Positions 408 to 411 (DEVH) match the DEVH box motif. The region spanning 510 to 676 (RACEFLIRFH…SLPPPDAGSS (167 aa)) is the Helicase C-terminal domain. Over residues 739-748 (SGRQKSGNQS) the composition is skewed to polar residues. Positions 739–766 (SGRQKSGNQSKKPKDPTKRHNIFKKRYV) are disordered. A Nuclear localization signal motif is present at residues 749 to 765 (KKPKDPTKRHNIFKKRY). Residues 757–766 (RHNIFKKRYV) show a composition bias toward basic residues.

The protein belongs to the helicase family. RAD25/XPB subfamily. In terms of assembly, component of the 7-subunit TFIIH core complex composed of XPB, XPD, TFB1/GTF2H1, GTF2H2/P44, TFB4/GTF2H3, TFB2/GTF2H4 and TFB5/GTF2H5, which is active in NER. The core complex associates with the 3-subunit CDK-activating kinase (CAK) module composed of CYCH1/cyclin H1, CDKD and MAT1/At4g30820 to form the 10-subunit holoenzyme (holo-TFIIH) active in transcription. Expressed ubiquitously.

Its subcellular location is the nucleus. It carries out the reaction Couples ATP hydrolysis with the unwinding of duplex DNA by translocating in the 3'-5' direction.. It catalyses the reaction ATP + H2O = ADP + phosphate + H(+). Its function is as follows. ATP-dependent 3'-5' DNA helicase/translocase; binds dsDNA rather than ssDNA, unzipping it in a translocase rather than classical helicase activity. Component of the general transcription and DNA repair factor IIH (TFIIH) core complex. When complexed to CDK-activating kinase (CAK), involved in RNA transcription by RNA polymerase II. The ATPase activity of XPB/ERCC3, but not its helicase activity, is required for DNA opening; it may wrap around the damaged DNA wedging it open, causing localized melting and twisting that allows XPD/ERCC2 helicase to anchor. The ATP-dependent helicase activity of XPB/ERCC3 may be required for promoter escape. Also involved in transcription-coupled nucleotide excision repair (NER) of damaged DNA. In NER, TFIIH acts by opening DNA around the lesion to allow the excision of the damaged oligonucleotide and its replacement by a new DNA fragment. The structure of the TFIIH transcription complex differs from the NER-TFIIH complex. Partially complements UV sensitivity of a yeast SSL2 mutation. The sequence is that of General transcription and DNA repair factor IIH helicase/translocase subunit XPB2 (XPB2) from Arabidopsis thaliana (Mouse-ear cress).